The following is a 326-amino-acid chain: Beta-ketoacyl-[acyl-carrier-protein] synthase III (326 aa).

Catalysis depends on residues C111 and H252. Residues 253 to 257 (QANIR) form an ACP-binding region. The active site involves N282.

The protein belongs to the thiolase-like superfamily. FabH family. Homodimer.

Its subcellular location is the plastid. The protein localises to the chloroplast. It carries out the reaction malonyl-[ACP] + acetyl-CoA + H(+) = 3-oxobutanoyl-[ACP] + CO2 + CoA. It functions in the pathway lipid metabolism; fatty acid biosynthesis. Functionally, catalyzes the condensation reaction of fatty acid synthesis by the addition to an acyl acceptor of two carbons from malonyl-ACP. Catalyzes the first condensation reaction which initiates fatty acid synthesis and may therefore play a role in governing the total rate of fatty acid production. Possesses both acetoacetyl-ACP synthase and acetyl transacylase activities. Its substrate specificity determines the biosynthesis of branched-chain and/or straight-chain of fatty acids. The sequence is that of Beta-ketoacyl-[acyl-carrier-protein] synthase III from Porphyra purpurea (Red seaweed).